Reading from the N-terminus, the 220-residue chain is Protein CREG1 (220 aa).

The N-terminal stretch at 1–31 (MAARAPELARSLLAALLAPALVALLVSPASG) is a signal peptide. The tract at residues 30 to 53 (SGRGGRDHGDWDVDRRLPPLPPRE) is disordered. Basic and acidic residues predominate over residues 33-53 (GGRDHGDWDVDRRLPPLPPRE). N-linked (GlcNAc...) asparagine glycans are attached at residues N160 and N216.

This sequence belongs to the CREG family. As to quaternary structure, homodimer. Interacts with IGF2R; the interaction is dependent on glycosylation. Post-translationally, N-glycosylated. In terms of tissue distribution, widely expressed.

Its subcellular location is the secreted. Functionally, may contribute to the transcriptional control of cell growth and differentiation. Antagonizes transcriptional activation and cellular transformation by the adenovirus E1A protein. The transcriptional control activity of cell growth requires interaction with IGF2R. The sequence is that of Protein CREG1 (Creg1) from Mus musculus (Mouse).